The following is a 535-amino-acid chain: Light-independent protochlorophyllide reductase subunit B (535 aa).

Asp-36 serves as a coordination point for [4Fe-4S] cluster. The active-site Proton donor is the Asp-287. Position 422-423 (422-423) interacts with substrate; that stretch reads GL.

This sequence belongs to the ChlB/BchB/BchZ family. As to quaternary structure, protochlorophyllide reductase is composed of three subunits; BchL, BchN and BchB. Forms a heterotetramer of two BchB and two BchN subunits. [4Fe-4S] cluster serves as cofactor.

The catalysed reaction is chlorophyllide a + oxidized 2[4Fe-4S]-[ferredoxin] + 2 ADP + 2 phosphate = protochlorophyllide a + reduced 2[4Fe-4S]-[ferredoxin] + 2 ATP + 2 H2O. It participates in porphyrin-containing compound metabolism; bacteriochlorophyll biosynthesis (light-independent). Functionally, component of the dark-operative protochlorophyllide reductase (DPOR) that uses Mg-ATP and reduced ferredoxin to reduce ring D of protochlorophyllide (Pchlide) to form chlorophyllide a (Chlide). This reaction is light-independent. The NB-protein (BchN-BchB) is the catalytic component of the complex. The polypeptide is Light-independent protochlorophyllide reductase subunit B (Rhodopseudomonas palustris (strain BisB5)).